Here is a 354-residue protein sequence, read N- to C-terminus: Uroporphyrinogen decarboxylase (354 aa).

Residues 27–31 (RQAGR), Phe-46, Asp-77, Tyr-154, Ser-209, and His-327 each bind substrate.

This sequence belongs to the uroporphyrinogen decarboxylase family. Homodimer.

It is found in the cytoplasm. It carries out the reaction uroporphyrinogen III + 4 H(+) = coproporphyrinogen III + 4 CO2. It functions in the pathway porphyrin-containing compound metabolism; protoporphyrin-IX biosynthesis; coproporphyrinogen-III from 5-aminolevulinate: step 4/4. Its function is as follows. Catalyzes the decarboxylation of four acetate groups of uroporphyrinogen-III to yield coproporphyrinogen-III. This chain is Uroporphyrinogen decarboxylase, found in Pseudomonas syringae pv. tomato (strain ATCC BAA-871 / DC3000).